The primary structure comprises 173 residues: Dual-action ribosomal maturation protein DarP (173 aa).

Belongs to the DarP family.

The protein localises to the cytoplasm. Its function is as follows. Member of a network of 50S ribosomal subunit biogenesis factors which assembles along the 30S-50S interface, preventing incorrect 23S rRNA structures from forming. Promotes peptidyl transferase center (PTC) maturation. This is Dual-action ribosomal maturation protein DarP from Pseudomonas fluorescens (strain ATCC BAA-477 / NRRL B-23932 / Pf-5).